Here is a 286-residue protein sequence, read N- to C-terminus: Protein GrpE (286 aa).

Disordered regions lie at residues 1-51 and 260-286; these read MSED…ETTA and VAAPKEPDSSETESTSESVSDVQQPTT. Low complexity-rich tracts occupy residues 39 to 50 and 271 to 286; these read QPSSTPQTPETT and TESTSESVSDVQQPTT.

This sequence belongs to the GrpE family. As to quaternary structure, homodimer.

The protein localises to the cytoplasm. Functionally, participates actively in the response to hyperosmotic and heat shock by preventing the aggregation of stress-denatured proteins, in association with DnaK and GrpE. It is the nucleotide exchange factor for DnaK and may function as a thermosensor. Unfolded proteins bind initially to DnaJ; upon interaction with the DnaJ-bound protein, DnaK hydrolyzes its bound ATP, resulting in the formation of a stable complex. GrpE releases ADP from DnaK; ATP binding to DnaK triggers the release of the substrate protein, thus completing the reaction cycle. Several rounds of ATP-dependent interactions between DnaJ, DnaK and GrpE are required for fully efficient folding. The polypeptide is Protein GrpE (Gloeothece citriformis (strain PCC 7424) (Cyanothece sp. (strain PCC 7424))).